Here is a 614-residue protein sequence, read N- to C-terminus: UvrABC system protein C (614 aa).

The GIY-YIG domain occupies 14 to 91 (TSPGCYIHKD…IKENKPKYNI (78 aa)). Residues 196–231 (DKIIDDLKSKMAVAAQSMEFERAAEYRDLIQAIGTL) enclose the UVR domain. The segment at 595 to 614 (LSQVAEERVDYQTEGNHNEP) is disordered. The segment covering 599-614 (AEERVDYQTEGNHNEP) has biased composition (basic and acidic residues).

This sequence belongs to the UvrC family. In terms of assembly, interacts with UvrB in an incision complex.

The protein localises to the cytoplasm. Functionally, the UvrABC repair system catalyzes the recognition and processing of DNA lesions. UvrC both incises the 5' and 3' sides of the lesion. The N-terminal half is responsible for the 3' incision and the C-terminal half is responsible for the 5' incision. This is UvrABC system protein C from Streptococcus pneumoniae serotype 2 (strain D39 / NCTC 7466).